A 388-amino-acid polypeptide reads, in one-letter code: Succinate--CoA ligase [ADP-forming] subunit beta (388 aa).

Positions 9–244 (KQLFAEYGLP…PSQEDEREAH (236 aa)) constitute an ATP-grasp domain. ATP is bound by residues lysine 46, 53–55 (GRG), glutamate 99, serine 102, and glutamate 107. Mg(2+)-binding residues include asparagine 199 and aspartate 213. Residues asparagine 264 and 321-323 (GIV) contribute to the substrate site.

This sequence belongs to the succinate/malate CoA ligase beta subunit family. In terms of assembly, heterotetramer of two alpha and two beta subunits. Requires Mg(2+) as cofactor.

It catalyses the reaction succinate + ATP + CoA = succinyl-CoA + ADP + phosphate. The catalysed reaction is GTP + succinate + CoA = succinyl-CoA + GDP + phosphate. The protein operates within carbohydrate metabolism; tricarboxylic acid cycle; succinate from succinyl-CoA (ligase route): step 1/1. Functionally, succinyl-CoA synthetase functions in the citric acid cycle (TCA), coupling the hydrolysis of succinyl-CoA to the synthesis of either ATP or GTP and thus represents the only step of substrate-level phosphorylation in the TCA. The beta subunit provides nucleotide specificity of the enzyme and binds the substrate succinate, while the binding sites for coenzyme A and phosphate are found in the alpha subunit. The polypeptide is Succinate--CoA ligase [ADP-forming] subunit beta (Aliivibrio salmonicida (strain LFI1238) (Vibrio salmonicida (strain LFI1238))).